We begin with the raw amino-acid sequence, 392 residues long: Putative purine permease 19 (392 aa).

Basic and acidic residues predominate over residues 1 to 16; sequence MGFHTKSPDRVTHEEE. The interval 1–29 is disordered; sequence MGFHTKSPDRVTHEEEANIGVDNQPRETT. Serine 30 is modified (phosphoserine). 10 helical membrane-spanning segments follow: residues 46–66, 88–108, 128–148, 154–174, 182–202, 220–240, 254–274, 300–320, 325–345, and 354–374; these read ICIFVCSCLVVAGRVLSTLLL, WLQSMVQNAAFPFTAFLLLLW, LFLLYISLGVLFAAYSQLYAI, VFFLWIFTSQLIFTSIFTTII, WIILSMVLSGAATGLGITSSG, WCAFFGTVAFSLSLCIMQLGF, VILMQTNASMIATLICLVGLF, LIGLSLAWQVMSLGLVGLVCL, FSNVVSFCSTPLVNILLVLAF, and FFKEGALVAGILGFASYVYSL.

Belongs to the purine permeases (TC 2.A.7.14) family.

It localises to the membrane. This chain is Putative purine permease 19 (PUP19), found in Arabidopsis thaliana (Mouse-ear cress).